Consider the following 267-residue polypeptide: Ras-related protein Rab-36 (267 aa).

V68, G69, K70, T71, S72, D83, Y86, and T89 together coordinate GTP. Residue T71 participates in Mg(2+) binding. Positions 76–94 (RLCKNVFDHDYKATIGVDF) match the Switch 1 motif. Residues T89 and D112 each coordinate Mg(2+). A Switch 2 motif is present at residues 113–132 (TAGQEKFKCIASAYYRGAQV). 6 residues coordinate GTP: G115, K172, D174, S203, A204, and K205. Residues C266 and C267 are each lipidated (S-geranylgeranyl cysteine).

Belongs to the small GTPase superfamily. Rab family. Mg(2+) serves as cofactor.

The protein resides in the golgi apparatus membrane. The enzyme catalyses GTP + H2O = GDP + phosphate + H(+). Its activity is regulated as follows. Regulated by guanine nucleotide exchange factors (GEFs) which promote the exchange of bound GDP for free GTP. Regulated by GTPase activating proteins (GAPs) which increase the GTP hydrolysis activity. Inhibited by GDP dissociation inhibitors (GDIs). Functionally, the small GTPases Rab are key regulators of intracellular membrane trafficking, from the formation of transport vesicles to their fusion with membranes. Rabs cycle between an inactive GDP-bound form and an active GTP-bound form that is able to recruit to membranes different sets of downstream effectors directly responsible for vesicle formation, movement, tethering and fusion. The sequence is that of Ras-related protein Rab-36 from Mus musculus (Mouse).